Here is a 248-residue protein sequence, read N- to C-terminus: Probable transcriptional regulatory protein RPB_4273 (248 aa).

Residues 1 to 22 are disordered; sequence MAGHSQFKNIMHRKGKQDAQRS.

This sequence belongs to the TACO1 family.

It is found in the cytoplasm. The sequence is that of Probable transcriptional regulatory protein RPB_4273 from Rhodopseudomonas palustris (strain HaA2).